We begin with the raw amino-acid sequence, 469 residues long: MKDLRMVFKSRMNNIHFVGIGGSGMSGIAEVLHNLNYSVSGSDISQNKITDRLEKMGCQIYHKHHQDNIKNAQVIVVSSAIKDNNLEVIKAHQLNIPVVPRAEMLAELMRFRFGIAIAGTHGKTTTTSIITHILNVAELDPTYIIGGILNSSGINAKLGESDYLIAEADESDASFLHLQPMLSVITNIDYDHMVTYDNDYQNLKDAFIKFSANLPFYGACIMCADDEGVNEILNSIHRPLITYGFNNGTDIQAVNVKQVGMQMYFDVIYDKYTKQIPIKLNLIGKHNILNTLAAIGICCELNIKTNIIQKALANFSGVARRLDHHGKLNINNAQVSLFDDYAHHPKEISAVFESLKNTYQDKRLVVIFQPHRYSRTRDLFDDFVYTLSSADILILLNIYPAQEKPIAHINSSTLANAIRRSSGLNPMVIKNPKEILTVLPSIVNNNDILLILGAGDIHILPDLLKSNYI.

119–125 contributes to the ATP binding site; the sequence is GTHGKTT.

Belongs to the MurCDEF family.

It localises to the cytoplasm. It carries out the reaction UDP-N-acetyl-alpha-D-muramate + L-alanine + ATP = UDP-N-acetyl-alpha-D-muramoyl-L-alanine + ADP + phosphate + H(+). It functions in the pathway cell wall biogenesis; peptidoglycan biosynthesis. Cell wall formation. In Ruthia magnifica subsp. Calyptogena magnifica, this protein is UDP-N-acetylmuramate--L-alanine ligase.